Reading from the N-terminus, the 258-residue chain is Imidazole glycerol phosphate synthase subunit HisF (258 aa).

Catalysis depends on residues aspartate 11 and aspartate 130.

The protein belongs to the HisA/HisF family. In terms of assembly, heterodimer of HisH and HisF.

The protein resides in the cytoplasm. It carries out the reaction 5-[(5-phospho-1-deoxy-D-ribulos-1-ylimino)methylamino]-1-(5-phospho-beta-D-ribosyl)imidazole-4-carboxamide + L-glutamine = D-erythro-1-(imidazol-4-yl)glycerol 3-phosphate + 5-amino-1-(5-phospho-beta-D-ribosyl)imidazole-4-carboxamide + L-glutamate + H(+). The protein operates within amino-acid biosynthesis; L-histidine biosynthesis; L-histidine from 5-phospho-alpha-D-ribose 1-diphosphate: step 5/9. Functionally, IGPS catalyzes the conversion of PRFAR and glutamine to IGP, AICAR and glutamate. The HisF subunit catalyzes the cyclization activity that produces IGP and AICAR from PRFAR using the ammonia provided by the HisH subunit. This Yersinia pseudotuberculosis serotype O:1b (strain IP 31758) protein is Imidazole glycerol phosphate synthase subunit HisF.